We begin with the raw amino-acid sequence, 424 residues long: UDP-N-acetylglucosamine 1-carboxyvinyltransferase (424 aa).

A phosphoenolpyruvate-binding site is contributed by 22–23 (KN). Arginine 98 is a UDP-N-acetyl-alpha-D-glucosamine binding site. The Proton donor role is filled by cysteine 122. Cysteine 122 bears the 2-(S-cysteinyl)pyruvic acid O-phosphothioketal mark. Residues 127–131 (RPVDQ), aspartate 312, and isoleucine 334 contribute to the UDP-N-acetyl-alpha-D-glucosamine site.

The protein belongs to the EPSP synthase family. MurA subfamily.

The protein localises to the cytoplasm. The enzyme catalyses phosphoenolpyruvate + UDP-N-acetyl-alpha-D-glucosamine = UDP-N-acetyl-3-O-(1-carboxyvinyl)-alpha-D-glucosamine + phosphate. It participates in cell wall biogenesis; peptidoglycan biosynthesis. Functionally, cell wall formation. Adds enolpyruvyl to UDP-N-acetylglucosamine. The polypeptide is UDP-N-acetylglucosamine 1-carboxyvinyltransferase (Xanthomonas campestris pv. campestris (strain 8004)).